Reading from the N-terminus, the 99-residue chain is uncharacterized protein (99 aa).

Residues 1-17 form the signal peptide; it reads MMMNAFFPAMALIVLVG. Cys18 is lipidated: N-palmitoyl cysteine. A lipid anchor (S-diacylglycerol cysteine) is attached at Cys18.

The protein localises to the cell membrane. This is an uncharacterized protein from Escherichia coli O6:H1 (strain CFT073 / ATCC 700928 / UPEC).